We begin with the raw amino-acid sequence, 538 residues long: 2-isopropylmalate synthase (538 aa).

One can recognise a Pyruvate carboxyltransferase domain in the interval 6–277 (LIIFDTTLRD…DSTVPLSTID (272 aa)). Residues Asp-15, His-206, His-208, and Asn-242 each contribute to the Mn(2+) site. The segment at 406–538 (RLEQVQVSCG…AHPDAAAQKL (133 aa)) is regulatory domain.

Belongs to the alpha-IPM synthase/homocitrate synthase family. LeuA type 1 subfamily. In terms of assembly, homodimer. It depends on Mn(2+) as a cofactor.

It is found in the cytoplasm. It carries out the reaction 3-methyl-2-oxobutanoate + acetyl-CoA + H2O = (2S)-2-isopropylmalate + CoA + H(+). The protein operates within amino-acid biosynthesis; L-leucine biosynthesis; L-leucine from 3-methyl-2-oxobutanoate: step 1/4. Functionally, catalyzes the condensation of the acetyl group of acetyl-CoA with 3-methyl-2-oxobutanoate (2-ketoisovalerate) to form 3-carboxy-3-hydroxy-4-methylpentanoate (2-isopropylmalate). This chain is 2-isopropylmalate synthase, found in Gloeobacter violaceus (strain ATCC 29082 / PCC 7421).